A 204-amino-acid chain; its full sequence is High frequency lysogenization protein HflD homolog (204 aa).

It belongs to the HflD family.

The protein localises to the cytoplasm. Its subcellular location is the cell inner membrane. This Shewanella woodyi (strain ATCC 51908 / MS32) protein is High frequency lysogenization protein HflD homolog.